The sequence spans 403 residues: MRGQVGDLSPQQQEALARFRETLQDLLPTLPKADDYFLLRWLRARNFDLKKSEDMLRKHVEFRNQQNLDQILTWQAPEVIQLYDSGGLSGYDYEGCPVWFDIIGTMDPKGLFMSASKQDMIRKRIKVCEMLLHECELQSQKLGRKIERMVMVFDMEGLSLRHLWKPAVEVYQQFFAILEANYPETVKNLIIIRAPKLFPVAFNLVKSFMGEETQKKIVILGGNWKQELVKFVSPDQLPVEFGGTMTDPDGNPKCLTKINYGGEVPKRYYLSNQERPQYEHSVVVGRGSSHQVENEILFPGCVLRWQFASDGGDIGFGVFLKTRMGERQKAGEMVEVLPSQRYNAHMVPEDGSLNCLKAGVYVLRFDNTYSLLHTKKVGYTAEVLLPDKACEEKLQGLGSVSPP.

Residues 76 to 249 (APEVIQLYDS…EFGGTMTDPD (174 aa)) form the CRAL-TRIO domain. The region spanning 275–383 (RPQYEHSVVV…TKKVGYTAEV (109 aa)) is the GOLD domain.

In terms of biological role, probable hydrophobic ligand-binding protein; may play a role in the transport of hydrophobic ligands like tocopherol, squalene and phospholipids. This chain is SEC14-like protein 4 (Sec14l4), found in Mus musculus (Mouse).